The following is a 62-amino-acid chain: Toxin Ct28 (62 aa).

An N-terminal signal peptide occupies residues 1 to 22 (MKAFYGILIILLFCSMFKLNES). 3 disulfide bridges follow: C29–C51, C35–C56, and C39–C58. Residue N61 is modified to Asparagine amide.

Belongs to the short scorpion toxin superfamily. Potassium channel inhibitor family. Alpha-KTx 02 subfamily. In terms of tissue distribution, expressed by the venom gland.

The protein resides in the secreted. Its function is as follows. Blocks voltage-gated potassium channels. This Centruroides tecomanus (Scorpion) protein is Toxin Ct28.